A 909-amino-acid chain; its full sequence is Probable dipeptidyl-aminopeptidase B (909 aa).

Residues 1–63 are disordered; the sequence is MRVGSRINDE…HNHNGRAQGN (63 aa). Over 1-94 the chain is Cytoplasmic; that stretch reads MRVGSRINDE…NGKSNQRRTL (94 aa). Positions 27 to 38 are enriched in low complexity; the sequence is DSSSTASISLTL. The chain crosses the membrane as a helical; Signal-anchor for type II membrane protein span at residues 95–115; the sequence is IVFWLLVALCVGGWAVAFLFF. The Vacuolar portion of the chain corresponds to 116–909; the sequence is VTSPGNKTST…YSNFLPIRSF (794 aa). The N-linked (GlcNAc...) asparagine glycan is linked to asparagine 121. Over residues 123–134 the composition is skewed to polar residues; sequence TSTSPHSGSNSP. The tract at residues 123–144 is disordered; it reads TSTSPHSGSNSPEGDVTKPGIP. 3 N-linked (GlcNAc...) asparagine glycosylation sites follow: asparagine 207, asparagine 303, and asparagine 355. Serine 760 acts as the Charge relay system in catalysis. Asparagine 814, asparagine 819, and asparagine 822 each carry an N-linked (GlcNAc...) asparagine glycan. Residues aspartate 837 and histidine 870 each act as charge relay system in the active site. An N-linked (GlcNAc...) asparagine glycan is attached at asparagine 888.

The protein belongs to the peptidase S9B family.

Its subcellular location is the vacuole membrane. It catalyses the reaction Release of an N-terminal dipeptide, Xaa-Yaa-|-Zaa-, from a polypeptide, preferentially when Yaa is Pro, provided Zaa is neither Pro nor hydroxyproline.. In terms of biological role, type IV dipeptidyl-peptidase which removes N-terminal dipeptides sequentially from polypeptides having unsubstituted N-termini provided that the penultimate residue is proline. The chain is Probable dipeptidyl-aminopeptidase B (DAPB) from Arthroderma benhamiae (strain ATCC MYA-4681 / CBS 112371) (Trichophyton mentagrophytes).